The chain runs to 593 residues: Aspartate--tRNA ligase (593 aa).

Glu-180 is a binding site for L-aspartate. Residues 204 to 207 (QIFK) form an aspartate region. Arg-226 is an L-aspartate binding site. ATP-binding positions include 226 to 228 (RDE) and Gln-235. Residue His-453 participates in L-aspartate binding. Glu-487 is an ATP binding site. Arg-494 serves as a coordination point for L-aspartate. Position 539–542 (539–542 (GLDR)) interacts with ATP.

Belongs to the class-II aminoacyl-tRNA synthetase family. Type 1 subfamily. Homodimer.

It is found in the cytoplasm. It carries out the reaction tRNA(Asp) + L-aspartate + ATP = L-aspartyl-tRNA(Asp) + AMP + diphosphate. Functionally, catalyzes the attachment of L-aspartate to tRNA(Asp) in a two-step reaction: L-aspartate is first activated by ATP to form Asp-AMP and then transferred to the acceptor end of tRNA(Asp). The chain is Aspartate--tRNA ligase from Clostridium botulinum (strain Okra / Type B1).